A 248-amino-acid polypeptide reads, in one-letter code: Acetylglutamate kinase (248 aa).

Substrate-binding positions include 36-37 (GG), R58, and N147.

It belongs to the acetylglutamate kinase family. ArgB subfamily.

The protein localises to the cytoplasm. It carries out the reaction N-acetyl-L-glutamate + ATP = N-acetyl-L-glutamyl 5-phosphate + ADP. The protein operates within amino-acid biosynthesis; L-arginine biosynthesis; N(2)-acetyl-L-ornithine from L-glutamate: step 2/4. Catalyzes the ATP-dependent phosphorylation of N-acetyl-L-glutamate. The chain is Acetylglutamate kinase from Thermus thermophilus (strain ATCC BAA-163 / DSM 7039 / HB27).